A 385-amino-acid polypeptide reads, in one-letter code: Glucans biosynthesis protein C (385 aa).

Helical transmembrane passes span 17–37 (AWLMLLGIPFHISLIYSSHTW), 60–80 (MQVFFVISGYFSYMLFLRYPL), 91–111 (VGIPMLTAIPLLTLPQFIMLQ), 137–157 (ISHLWFLLVLVVMTTLCVWIF), 173–193 (KFSMVKLSVIFLCLGIGYAVI), 212–232 (FIVMQTLFYLPFFILGALAFI), 239–259 (LFTTPSRGCTLAAALAFVAYL), 274–294 (TESVITMVLGLWMVNVVFSFG), 311–331 (ASLFIYLVHHPLTLFFGAYIT), and 338–358 (WLGFLCGLIFVVGIAIILYEI).

Belongs to the acyltransferase 3 family. OpgC subfamily.

The protein resides in the cell membrane. The protein operates within glycan metabolism; osmoregulated periplasmic glucan (OPG) biosynthesis. In terms of biological role, necessary for the succinyl substitution of periplasmic glucans. Could catalyze the transfer of succinyl residues from the cytoplasmic side of the membrane to the nascent glucan backbones on the periplasmic side of the membrane. This Shigella dysenteriae serotype 1 (strain Sd197) protein is Glucans biosynthesis protein C.